The sequence spans 590 residues: MLKPGDPGGSAFLKVDPAYLQHWQQLFPHGGGGPLKGGGAAGPLGAPQPLQPPPPPERAEPQPDSLRPRPASLSSASSTPASSSTSASSASSCAAAAAAAAAAALAGLSALPVAQLPVFAPLATVAAEPLPPKDLCLGATSGPGPSKCGGSGGDGRGVPRFRCSAEELDYYLYGQQRMEIIPLNQHTSDPNNRCDMCADNRNGECPMHGPLHSLRRLVGTSSAAAAAPPPELPEWLRDLPREVCLCTSTVPGLAYGICAAQRIQQGTWIGPFQGVLLPPEKVQAGAVRNTQHLWEIYDQDGTLQHFIDGGEPSKSSWMRYIRCARHCGEQNLTVVQYRSNIFYRACIDIPRGTELLVWYNDSYTSFFGIPLQCIAQDENLNVPSTVMEAMCRQDALQPFNKSSKLSQAPQQRSVVFPQTPCGRNFSLLDKSGPLESGFNQISVKNQRVLASPTSTSQLHSEFSDWHLWKCGQCFKTFTQRILLQMHVCTQNPDRPYQCGHCSQSFSQPSELRNHVVTHSSDRPFKCGYCGRAFAGATTLNNHIRTHTGEKPFKCERCERSFTQATQLSRHQRMPNECKPITESPESIEVD.

The tract at residues 25 to 87 is disordered; that stretch reads QLFPHGGGGP…STPASSSTSA (63 aa). The segment covering 29 to 42 has biased composition (gly residues); sequence HGGGGPLKGGGAAG. Low complexity predominate over residues 71-87; that stretch reads ASLSSASSTPASSSTSA. Residues 241-360 enclose the SET domain; it reads REVCLCTSTV…RGTELLVWYN (120 aa). The segment at 468-490 adopts a C2H2-type 1; degenerate zinc-finger fold; it reads WKCGQCFKTFTQRILLQMHVCTQ. 2 C2H2-type zinc fingers span residues 496–518 and 524–546; these read YQCGHCSQSFSQPSELRNHVVTH and FKCGYCGRAFAGATTLNNHIRTH. The segment at 552 to 574 adopts a C2H2-type 4; degenerate zinc-finger fold; it reads FKCERCERSFTQATQLSRHQRMP.

This sequence belongs to the class V-like SAM-binding methyltransferase superfamily. Interacts with HDAC1, HDAC2, HDAC3, CBX1 and EP300.

Its subcellular location is the nucleus. The catalysed reaction is L-lysyl(20)-[histone H4] + S-adenosyl-L-methionine = N(6)-methyl-L-lysyl(20)-[histone H4] + S-adenosyl-L-homocysteine + H(+). Putative histone methyltransferase that acts as a transcriptional repressor of smooth muscle gene expression. Promotes the transition from differentiated to proliferative smooth muscle by suppressing differentiation and maintaining the proliferative potential of vascular smooth muscle cells. Also plays a role in endothelial cells by inhibiting endothelial cell proliferation, survival and differentiation. It is unclear whether it has histone methyltransferase activity in vivo. According to some authors, it does not act as a histone methyltransferase by itself and represses transcription by recruiting EHMT2/G9a. According to others, it possesses histone methyltransferase activity when associated with other proteins and specifically methylates 'Lys-20' of histone H4 in vitro. 'Lys-20' methylation represents a specific tag for epigenetic transcriptional repression. This is Putative histone-lysine N-methyltransferase PRDM6 (PRDM6) from Bos taurus (Bovine).